We begin with the raw amino-acid sequence, 431 residues long: 4-hydroxy-3-methylbut-2-en-1-yl diphosphate synthase (flavodoxin) (431 aa).

A compositionally biased stretch (basic and acidic residues) spans M1–V12. The segment at M1–Q20 is disordered. [4Fe-4S] cluster-binding residues include C310, C313, C356, and E363.

Belongs to the IspG family. The cofactor is [4Fe-4S] cluster.

The enzyme catalyses (2E)-4-hydroxy-3-methylbut-2-enyl diphosphate + oxidized [flavodoxin] + H2O + 2 H(+) = 2-C-methyl-D-erythritol 2,4-cyclic diphosphate + reduced [flavodoxin]. The protein operates within isoprenoid biosynthesis; isopentenyl diphosphate biosynthesis via DXP pathway; isopentenyl diphosphate from 1-deoxy-D-xylulose 5-phosphate: step 5/6. Functionally, converts 2C-methyl-D-erythritol 2,4-cyclodiphosphate (ME-2,4cPP) into 1-hydroxy-2-methyl-2-(E)-butenyl 4-diphosphate. The protein is 4-hydroxy-3-methylbut-2-en-1-yl diphosphate synthase (flavodoxin) of Rhodopseudomonas palustris (strain TIE-1).